A 123-amino-acid chain; its full sequence is ATP synthase epsilon chain (123 aa).

It belongs to the ATPase epsilon chain family. As to quaternary structure, F-type ATPases have 2 components, CF(1) - the catalytic core - and CF(0) - the membrane proton channel. CF(1) has five subunits: alpha(3), beta(3), gamma(1), delta(1), epsilon(1). CF(0) has three main subunits: a, b and c.

The protein resides in the cell inner membrane. In terms of biological role, produces ATP from ADP in the presence of a proton gradient across the membrane. This chain is ATP synthase epsilon chain, found in Helicobacter pylori (strain G27).